A 390-amino-acid chain; its full sequence is Protein PIN-LIKES 3 (390 aa).

Topologically, residues 1–14 are lumenal; it reads MVKLLELFITSSKP. The chain crosses the membrane as a helical span at residues 15–35; sequence VVEILLITSVGFYMALDGVNL. The Cytoplasmic segment spans residues 36–43; that stretch reads LGHDARKY. The chain crosses the membrane as a helical span at residues 44-61; that stretch reads LNNIVFYVFSPSLIGSRL. The Lumenal portion of the chain corresponds to 62–76; sequence ADSVTYESLVKMWFM. The helical transmembrane segment at 77 to 97 threads the bilayer; the sequence is PVNVLLTFIIGSLLGWIVIVI. Residues 98–107 lie on the Cytoplasmic side of the membrane; it reads TKPPSHLRGL. Residues 108–128 form a helical membrane-spanning segment; that stretch reads ILGCCAAGNLGNMPLIIIPAV. Over 129 to 144 the chain is Lumenal; it reads CKEKGGPFGDPESCQK. Residues 145–165 form a helical membrane-spanning segment; sequence YGMGYVALSMAMGSIYIWTYV. The Cytoplasmic segment spans residues 166-227; it reads YNLMRVLSNS…SLSQKVNLKT (62 aa). Residues 228 to 248 form a helical membrane-spanning segment; it reads IFAPSTIAAMIALVIGLITPL. Residues 249–265 are Lumenal-facing; it reads RKLIIGTEAPLRVLQDS. A helical membrane pass occupies residues 266–286; that stretch reads VTLVGDGAVPAMTMIIGGNLL. Topologically, residues 287–297 are cytoplasmic; sequence KGLRSSGMKMS. Residues 298-318 form a helical membrane-spanning segment; it reads SIIGVLVARYVLLPMSGVLIV. The Lumenal portion of the chain corresponds to 319–331; sequence RGAYKLDLVTSEP. The helical transmembrane segment at 332-352 threads the bilayer; it reads LYQFVLLLQYAVPPAMNLGTI. The Cytoplasmic portion of the chain corresponds to 353–364; the sequence is TQLFGTGESECS. A helical membrane pass occupies residues 365-385; the sequence is VIMLWTYSLASIALTVWPTFF. The Lumenal segment spans residues 386–390; that stretch reads MWLVA.

Belongs to the auxin efflux carrier (TC 2.A.69.2) family. Expressed in seedlings, rosette and cauline leaves, flowers and siliques.

The protein localises to the endoplasmic reticulum membrane. Involved in cellular auxin homeostasis by regulating auxin metabolism. Regulates intracellular auxin accumulation at the endoplasmic reticulum and thus auxin availability for nuclear auxin signaling. In Arabidopsis thaliana (Mouse-ear cress), this protein is Protein PIN-LIKES 3 (PILS3).